Reading from the N-terminus, the 379-residue chain is tRNA-specific 2-thiouridylase MnmA (379 aa).

ATP is bound by residues 6 to 13 (AMSGGVDS) and Leu-32. Cys-101 functions as the Nucleophile in the catalytic mechanism. A disulfide bridge connects residues Cys-101 and Cys-199. Residue Gly-125 participates in ATP binding. The tract at residues 148-150 (KDQ) is interaction with tRNA. Cys-199 serves as the catalytic Cysteine persulfide intermediate.

The protein belongs to the MnmA/TRMU family.

Its subcellular location is the cytoplasm. It carries out the reaction S-sulfanyl-L-cysteinyl-[protein] + uridine(34) in tRNA + AH2 + ATP = 2-thiouridine(34) in tRNA + L-cysteinyl-[protein] + A + AMP + diphosphate + H(+). Functionally, catalyzes the 2-thiolation of uridine at the wobble position (U34) of tRNA, leading to the formation of s(2)U34. The sequence is that of tRNA-specific 2-thiouridylase MnmA from Arthrobacter sp. (strain FB24).